The primary structure comprises 255 residues: 5'-nucleotidase SurE (255 aa).

Residues aspartate 8, aspartate 9, serine 39, and asparagine 91 each coordinate a divalent metal cation.

Belongs to the SurE nucleotidase family. A divalent metal cation is required as a cofactor.

It localises to the cytoplasm. It catalyses the reaction a ribonucleoside 5'-phosphate + H2O = a ribonucleoside + phosphate. Functionally, nucleotidase that shows phosphatase activity on nucleoside 5'-monophosphates. This chain is 5'-nucleotidase SurE, found in Nitrosospira multiformis (strain ATCC 25196 / NCIMB 11849 / C 71).